The sequence spans 457 residues: DNA repair protein RadA (457 aa).

A C4-type zinc finger spans residues 12–29 (CQACGYESAKWMGKCPNC). 97 to 104 (GDPGIGKS) provides a ligand contact to ATP. The RadA KNRFG motif signature appears at 254-258 (KNRFG). A lon-protease-like region spans residues 353-457 (DAYLKAAGGV…GEALKKALPD (105 aa)).

The protein belongs to the RecA family. RadA subfamily.

Its function is as follows. DNA-dependent ATPase involved in processing of recombination intermediates, plays a role in repairing DNA breaks. Stimulates the branch migration of RecA-mediated strand transfer reactions, allowing the 3' invading strand to extend heteroduplex DNA faster. Binds ssDNA in the presence of ADP but not other nucleotides, has ATPase activity that is stimulated by ssDNA and various branched DNA structures, but inhibited by SSB. Does not have RecA's homology-searching function. This chain is DNA repair protein RadA, found in Listeria monocytogenes serovar 1/2a (strain ATCC BAA-679 / EGD-e).